Reading from the N-terminus, the 787-residue chain is Serine proteinase stubble (787 aa).

The interval 1-22 (MKQPTLIRPRLRHRRSTPAAAT) is disordered. Residues 1–58 (MKQPTLIRPRLRHRRSTPAAATKMCPKRHWLVNNRAAGSRGSGGAAARSRRSLDQIVE) are Cytoplasmic-facing. Residues 59 to 80 (VLVALIVVNCLATAAAALITPP) traverse the membrane as a helical; Signal-anchor for type II membrane protein segment. Residues 81-787 (DSLESLGSLG…FTPWILEHVR (707 aa)) are Extracellular-facing. N177 carries an N-linked (GlcNAc...) asparagine glycan. Residues 225–516 (AGTLVIRPSG…EISDSSIPDA (292 aa)) are disordered. 5 stretches are compositionally biased toward low complexity: residues 262–280 (SASHPSSSSSSSSSSNPNS), 287–303 (QQQQQQQHQQNQQNHWQ), 358–368 (PSTSTSTTSTS), 393–438 (SLAA…RTTT), and 449–485 (TTATSSSSTSTTSSKTPTTTRPISSSSSSSSGIVTSS). Polar residues predominate over residues 502–512 (GIETNEISDSS). 2 disulfides stabilise this stretch: C532-C660 and C575-C591. The Peptidase S1 domain maps to 544–787 (IVGGKSAAFG…FTPWILEHVR (244 aa)). Residues H590 and D640 each act as charge relay system in the active site. An N-linked (GlcNAc...) asparagine glycan is attached at N672. Cystine bridges form between C704–C723 and C734–C763. The Charge relay system role is filled by S738.

The protein belongs to the peptidase S1 family. May activate itself by proteolytic cleavage.

It is found in the membrane. In terms of biological role, hormone dependent protease required for epithelial morphogenesis, including the formation of bristles, legs, and wings. Has a dual function, detaches imaginal disk cells from extracellular matrices through its extracellular proteolytic domain and transmits an outside-to-inside signal to its intracellular domain to modify the cytoskeleton during morphogenesis. In Drosophila melanogaster (Fruit fly), this protein is Serine proteinase stubble (Sb).